The following is a 624-amino-acid chain: Phosphoenolpyruvate carboxykinase [GTP] (624 aa).

Substrate is bound by residues Arg-88 and 222-224 (YGG). Lys-231 and His-250 together coordinate Mn(2+). Ser-272 serves as a coordination point for substrate. Residue 273–278 (MCGKTS) coordinates GTP. The active site involves Cys-274. Asp-291 lines the Mn(2+) pocket. Residue 386-388 (NAR) coordinates substrate. Residues Arg-388 and Arg-420 each contribute to the GTP site.

This sequence belongs to the phosphoenolpyruvate carboxykinase [GTP] family. It depends on Mn(2+) as a cofactor.

Its subcellular location is the cytoplasm. It catalyses the reaction oxaloacetate + GTP = phosphoenolpyruvate + GDP + CO2. The protein operates within carbohydrate biosynthesis; gluconeogenesis. Catalyzes the conversion of oxaloacetate (OAA) to phosphoenolpyruvate (PEP), the rate-limiting step in the metabolic pathway that produces glucose from lactate and other precursors derived from the citric acid cycle. This chain is Phosphoenolpyruvate carboxykinase [GTP], found in Pyrococcus furiosus (strain ATCC 43587 / DSM 3638 / JCM 8422 / Vc1).